The primary structure comprises 125 residues: Small ribosomal subunit protein uS13 (125 aa).

The disordered stretch occupies residues Arg-92–Lys-125. Positions Arg-107–Lys-125 are enriched in basic residues.

It belongs to the universal ribosomal protein uS13 family. Part of the 30S ribosomal subunit. Forms a loose heterodimer with protein S19. Forms two bridges to the 50S subunit in the 70S ribosome.

Its function is as follows. Located at the top of the head of the 30S subunit, it contacts several helices of the 16S rRNA. In the 70S ribosome it contacts the 23S rRNA (bridge B1a) and protein L5 of the 50S subunit (bridge B1b), connecting the 2 subunits; these bridges are implicated in subunit movement. Contacts the tRNAs in the A and P-sites. In Chlorobium luteolum (strain DSM 273 / BCRC 81028 / 2530) (Pelodictyon luteolum), this protein is Small ribosomal subunit protein uS13.